Reading from the N-terminus, the 284-residue chain is Tegument protein UL23 (284 aa).

Belongs to the herpesviridae US22 family. Interacts with host NMI; this interaction inhibits NMI interaction with STAT1.

The protein resides in the virion tegument. Its subcellular location is the host cytoplasm. Plays a role in the inhibition of host innate immune response by disrupting the interaction between NMI and STAT1. In turn, NMI-mediated transcription of interferon-gamma stimulated genes is inhibited. This Homo sapiens (Human) protein is Tegument protein UL23 (UL23).